Here is a 367-residue protein sequence, read N- to C-terminus: Alginate lyase (367 aa).

A signal peptide spans 1–24 (MTIINRKTAPALLALALFGGAAQA). Substrate is bound by residues 63–64 (SK), 136–137 (HT), and Tyr-254.

Belongs to the polysaccharide lyase 5 family.

The protein resides in the periplasm. The catalysed reaction is Eliminative cleavage of alginate to give oligosaccharides with 4-deoxy-alpha-L-erythro-hex-4-enuronosyl groups at their non-reducing ends and beta-D-mannuronate at their reducing end.. Functionally, catalyzes the depolymerization of alginate by cleaving the beta-1,4 glycosidic bond between two adjacent sugar residues via a beta-elimination mechanism. May serve to degrade mislocalized alginate that is trapped in the periplasmic space. The chain is Alginate lyase from Pseudomonas entomophila (strain L48).